We begin with the raw amino-acid sequence, 898 residues long: Alanine--tRNA ligase (898 aa).

Residues His589, His593, Cys693, and His697 each contribute to the Zn(2+) site.

This sequence belongs to the class-II aminoacyl-tRNA synthetase family. Zn(2+) serves as cofactor.

It localises to the cytoplasm. The catalysed reaction is tRNA(Ala) + L-alanine + ATP = L-alanyl-tRNA(Ala) + AMP + diphosphate. In terms of biological role, catalyzes the attachment of alanine to tRNA(Ala) in a two-step reaction: alanine is first activated by ATP to form Ala-AMP and then transferred to the acceptor end of tRNA(Ala). Also edits incorrectly charged Ser-tRNA(Ala) and Gly-tRNA(Ala) via its editing domain. The protein is Alanine--tRNA ligase of Methanothermobacter thermautotrophicus (strain ATCC 29096 / DSM 1053 / JCM 10044 / NBRC 100330 / Delta H) (Methanobacterium thermoautotrophicum).